A 1488-amino-acid polypeptide reads, in one-letter code: MIERGKFRSLTLINWNGFFARTFDLDELVTTLSGGNGAGKSTTMAAFVTALIPDLTLLHFRNTTEAGATSGSRDKGLHGKLKAGVCYSMLDTINSRHQRVVVGVRLQQVAGRDRKVDIKPFAIQGLPMSVQPTQLVTETLNERQARVLSLAELKDKLDEMEGVQFKQFNSITDYHSLMFDLGIIARRLRSASDRSKFYRLIEASLYGGISSAITRSLRDYLLPENSGVRKAFQDMEAALRENRLTLEAIRVTQSDRDLFKHLISEATDYVAADYMRHANERRVHLDQALAFRRELYTSRKQLAAEQYKHVDMARELGEHNGAEGSLEADYQAASDHLNLVQTALRQQEKIERYEADLEELQIRLEEQNEVVAEAAEMQDENEARAEAAELEVDELKSQLADYQQALDVQQTRAIQYNQAISALSRAKELCHLPDLTPESAAEWLDTFQAKEQEATEKLLSLEQKMSVAQTAHSQFEQAYQLVAAINGPLARSEAWDVARELLRDGVNQRHLAEQVQPLRMRLSELEQRLREQQEAERLLAEFCKRQGKNFDIDELEALHQELEARIASLSDSVSSASEQRMALRQEQEQLQSRIQHLMRRAPVWLAAQNSLNQLSEQCGEEFTSSQEVTEYLQQLLEREREAIVERDEVGARKNAVDEEIERLSQPGGAEDQRLNALAERFGGVLLSEIYDDVSLEDAPYFSALYGPSRHAIVVPDLSQIAEQLEGLTDCPEDLYLIEGDPQSFDDSVFSVDELEKAVVVKIADRQWRYSRFPSLPIFGRAARENRIESLHAEREVLSERFATLSFDVQKTQRLHQAFSRFIGSHLSVAFEDDPEAEIRRLNGRRVELERALATHESDNQQQRLQFEQAKEGVSALNRLLPRLNLLADETLADRVDEIQERLDEAQEAARFVQQYGNQLAKLEPVVSVLQSDPEQFEQLKEDYAWSQQMQRDARQQAFALAEVVERRAHFSYSDSAEMLSGNSDLNEKLRQRLEQAEAERTRAREALRSHAAQLSQYSQVLASLKSSYDTKKELLNDLQRELQDIGVRADSGAEERARQRRDELHAQLSNNRSRRNQLEKALTFCEAEMENLTRKLRKLERDYHEMREQVVTAKAGWCAVMRMVKDNGVERRLHRRELAYLSADELRSMSDKALGALRLAVADNEHLRDVLRLSEDPKRPERKIQFFVAVYQHLRERIRQDIIRTDDPVEAIEQMEIELSRLTEELTSREQKLAISSRSVANIIRKTIQREQNRIRMLNQGLQSVSFGQVNSVRLNVNVRETHATLLDVLSEQQEQHQDLFNSNRLTFSEALAKLYQRLNPQIDMGQRTPQTIGEELLDYRNYLEMEVEVNRGSDGWLRAESGALSTGEAIGTGMSILVMVVQSWEDEARRLRGKDISPCRLLFLDEAARLDARSIATLFELCERLQMQLIIAAPENISPEKGTTYKLVRKVFQNTEHVHVVGLRGFAPQLPETLPGTQTEDTPSEAS.

34 to 41 provides a ligand contact to ATP; sequence GGNGAGKS. 3 coiled-coil regions span residues 326-418, 444-472, and 509-602; these read LEAD…QYNQ, LDTF…QTAH, and RHLA…RRAP. The tract at residues 666-783 is flexible hinge; that stretch reads PGGAEDQRLN…SLPIFGRAAR (118 aa). Coiled-coil stretches lie at residues 835-923, 977-1116, and 1209-1265; these read EAEI…AKLE, EMLS…AKAG, and VEAI…LQSV. The disordered stretch occupies residues 1049–1074; it reads ADSGAEERARQRRDELHAQLSNNRSR. The segment covering 1051-1065 has biased composition (basic and acidic residues); that stretch reads SGAEERARQRRDELH.

This sequence belongs to the SMC family. MukB subfamily. As to quaternary structure, homodimerization via its hinge domain. Binds to DNA via its C-terminal region. Interacts, and probably forms a ternary complex, with MukE and MukF via its C-terminal region. The complex formation is stimulated by calcium or magnesium. Interacts with tubulin-related protein FtsZ.

It localises to the cytoplasm. The protein resides in the nucleoid. Its function is as follows. Plays a central role in chromosome condensation, segregation and cell cycle progression. Functions as a homodimer, which is essential for chromosome partition. Involved in negative DNA supercoiling in vivo, and by this means organize and compact chromosomes. May achieve or facilitate chromosome segregation by condensation DNA from both sides of a centrally located replisome during cell division. In Salmonella heidelberg (strain SL476), this protein is Chromosome partition protein MukB.